The primary structure comprises 236 residues: THO complex subunit 7B (236 aa).

The stretch at 99-228 (EANLREKESF…IRSASEDQRN (130 aa)) forms a coiled coil.

This sequence belongs to the THOC7 family. As to quaternary structure, component of the THO complex, which is composed of THO1, THO2, THO3, THO5, THO6 and THO7.

The protein localises to the nucleus. Its function is as follows. Acts as a component of the THO subcomplex of the TREX complex which is thought to couple mRNA transcription, processing and nuclear export. The protein is THO complex subunit 7B (THO7B) of Arabidopsis thaliana (Mouse-ear cress).